The primary structure comprises 417 residues: RH-like protein IIR (417 aa).

The next 11 helical transmembrane spans lie at 12–32 (CLPL…YFFT), 44–64 (LVAS…GFGF), 77–97 (VAFS…LDGF), 125–145 (ISVD…MVLV), 172–192 (IYVF…KPLP), 203–223 (TIPS…WPSF), 238–258 (VFNT…GSSL), 265–285 (ISMS…GTSC), 287–307 (LIPS…ISVG), 331–351 (NFSW…VRHT), and 358–378 (MIGF…TIAL).

The protein belongs to the ammonium transporter (TC 2.A.49) family. Rh subfamily.

The protein resides in the membrane. In terms of biological role, may be part of an oligomeric complex which is likely to have a transport or channel function in the erythrocyte membrane. In Pan troglodytes (Chimpanzee), this protein is RH-like protein IIR.